A 290-amino-acid polypeptide reads, in one-letter code: Ribosomal RNA small subunit methyltransferase A (290 aa).

The S-adenosyl-L-methionine site is built by Asn27, Leu29, Gly54, Glu75, Asp100, and Asn125.

This sequence belongs to the class I-like SAM-binding methyltransferase superfamily. rRNA adenine N(6)-methyltransferase family. RsmA subfamily.

The protein resides in the cytoplasm. The enzyme catalyses adenosine(1518)/adenosine(1519) in 16S rRNA + 4 S-adenosyl-L-methionine = N(6)-dimethyladenosine(1518)/N(6)-dimethyladenosine(1519) in 16S rRNA + 4 S-adenosyl-L-homocysteine + 4 H(+). Functionally, specifically dimethylates two adjacent adenosines (A1518 and A1519) in the loop of a conserved hairpin near the 3'-end of 16S rRNA in the 30S particle. May play a critical role in biogenesis of 30S subunits. This is Ribosomal RNA small subunit methyltransferase A from Streptococcus pneumoniae (strain 70585).